The primary structure comprises 284 residues: RNase adapter protein RapZ (284 aa).

8-15 (GRSGSGKS) provides a ligand contact to ATP. 56–59 (DVRN) contributes to the GTP binding site. Positions 266-284 (RSRGKNVQSRHRTLEKRKP) are RNA-binding.

The protein belongs to the RapZ-like family. RapZ subfamily. In terms of assembly, homotrimer.

In terms of biological role, modulates the synthesis of GlmS, by affecting the processing and stability of the regulatory small RNA GlmZ. When glucosamine-6-phosphate (GlcN6P) concentrations are high in the cell, RapZ binds GlmZ and targets it to cleavage by RNase E. Consequently, GlmZ is inactivated and unable to activate GlmS synthesis. Under low GlcN6P concentrations, RapZ is sequestered and inactivated by an other regulatory small RNA, GlmY, preventing GlmZ degradation and leading to synthesis of GlmS. This chain is RNase adapter protein RapZ, found in Escherichia coli O1:K1 / APEC.